The following is a 543-amino-acid chain: CTP synthase (543 aa).

Residues 1 to 265 (MARYIFITGG…DDEVLAAFAI (265 aa)) are amidoligase domain. Serine 13 serves as a coordination point for CTP. Serine 13 contributes to the UTP binding site. Residue 14 to 19 (SLGKGL) coordinates ATP. Tyrosine 54 contacts L-glutamine. Residue aspartate 71 participates in ATP binding. Residues aspartate 71 and glutamate 139 each coordinate Mg(2+). CTP is bound by residues 146–148 (DIE), 186–191 (KTKPTQ), and lysine 222. UTP-binding positions include 186 to 191 (KTKPTQ) and lysine 222. Residue 238 to 240 (RDA) participates in ATP binding. The Glutamine amidotransferase type-1 domain maps to 291 to 542 (TIAIVGKYTG…IEAALVRSRL (252 aa)). L-glutamine is bound at residue glycine 353. Cysteine 380 (nucleophile; for glutamine hydrolysis) is an active-site residue. L-glutamine-binding positions include 381–384 (FGMQ), glutamate 404, and arginine 470. Residues histidine 515 and glutamate 517 contribute to the active site.

Belongs to the CTP synthase family. As to quaternary structure, homotetramer.

It catalyses the reaction UTP + L-glutamine + ATP + H2O = CTP + L-glutamate + ADP + phosphate + 2 H(+). It carries out the reaction L-glutamine + H2O = L-glutamate + NH4(+). The enzyme catalyses UTP + NH4(+) + ATP = CTP + ADP + phosphate + 2 H(+). The protein operates within pyrimidine metabolism; CTP biosynthesis via de novo pathway; CTP from UDP: step 2/2. Its activity is regulated as follows. Allosterically activated by GTP, when glutamine is the substrate; GTP has no effect on the reaction when ammonia is the substrate. The allosteric effector GTP functions by stabilizing the protein conformation that binds the tetrahedral intermediate(s) formed during glutamine hydrolysis. Inhibited by the product CTP, via allosteric rather than competitive inhibition. Catalyzes the ATP-dependent amination of UTP to CTP with either L-glutamine or ammonia as the source of nitrogen. Regulates intracellular CTP levels through interactions with the four ribonucleotide triphosphates. The sequence is that of CTP synthase from Rhodopseudomonas palustris (strain BisB5).